Consider the following 218-residue polypeptide: Protein-L-isoaspartate O-methyltransferase (218 aa).

The active site involves serine 63.

The protein belongs to the methyltransferase superfamily. L-isoaspartyl/D-aspartyl protein methyltransferase family.

The protein resides in the cytoplasm. It catalyses the reaction [protein]-L-isoaspartate + S-adenosyl-L-methionine = [protein]-L-isoaspartate alpha-methyl ester + S-adenosyl-L-homocysteine. Its function is as follows. Catalyzes the methyl esterification of L-isoaspartyl residues in peptides and proteins that result from spontaneous decomposition of normal L-aspartyl and L-asparaginyl residues. It plays a role in the repair and/or degradation of damaged proteins. The protein is Protein-L-isoaspartate O-methyltransferase of Syntrophus aciditrophicus (strain SB).